The following is a 302-amino-acid chain: Lipoyl synthase (302 aa).

Cysteine 44, cysteine 49, cysteine 55, cysteine 70, cysteine 74, cysteine 77, and serine 283 together coordinate [4Fe-4S] cluster. Residues 56 to 272 (WSKKHATVMI…ARVAKSKGFL (217 aa)) form the Radical SAM core domain.

Belongs to the radical SAM superfamily. Lipoyl synthase family. The cofactor is [4Fe-4S] cluster.

It localises to the cytoplasm. The catalysed reaction is [[Fe-S] cluster scaffold protein carrying a second [4Fe-4S](2+) cluster] + N(6)-octanoyl-L-lysyl-[protein] + 2 oxidized [2Fe-2S]-[ferredoxin] + 2 S-adenosyl-L-methionine + 4 H(+) = [[Fe-S] cluster scaffold protein] + N(6)-[(R)-dihydrolipoyl]-L-lysyl-[protein] + 4 Fe(3+) + 2 hydrogen sulfide + 2 5'-deoxyadenosine + 2 L-methionine + 2 reduced [2Fe-2S]-[ferredoxin]. It participates in protein modification; protein lipoylation via endogenous pathway; protein N(6)-(lipoyl)lysine from octanoyl-[acyl-carrier-protein]: step 2/2. In terms of biological role, catalyzes the radical-mediated insertion of two sulfur atoms into the C-6 and C-8 positions of the octanoyl moiety bound to the lipoyl domains of lipoate-dependent enzymes, thereby converting the octanoylated domains into lipoylated derivatives. This is Lipoyl synthase from Orientia tsutsugamushi (strain Ikeda) (Rickettsia tsutsugamushi).